Consider the following 247-residue polypeptide: Ribonuclease 3 (247 aa).

Residues 5-147 (LIALQERLQH…LIGAVYLDAG (143 aa)) enclose the RNase III domain. Glutamate 40 is a Mg(2+) binding site. Aspartate 44 is an active-site residue. The interval 104-124 (QRRSRRRCADELQPDEAGSGG) is disordered. The Mg(2+) site is built by aspartate 133 and glutamate 136. Glutamate 136 is a catalytic residue. In terms of domain architecture, DRBM spans 174–244 (DAKTALQEWL…AAAMLATLKA (71 aa)).

The protein belongs to the ribonuclease III family. As to quaternary structure, homodimer. Mg(2+) serves as cofactor.

Its subcellular location is the cytoplasm. The enzyme catalyses Endonucleolytic cleavage to 5'-phosphomonoester.. Its function is as follows. Digests double-stranded RNA. Involved in the processing of primary rRNA transcript to yield the immediate precursors to the large and small rRNAs (23S and 16S). Processes some mRNAs, and tRNAs when they are encoded in the rRNA operon. Processes pre-crRNA and tracrRNA of type II CRISPR loci if present in the organism. The protein is Ribonuclease 3 of Verminephrobacter eiseniae (strain EF01-2).